Consider the following 269-residue polypeptide: 15-hydroxyprostaglandin dehydrogenase [NAD(+)] (269 aa).

NAD(+)-binding positions include 12-20 (GAAQGIGKA), 36-37 (DW), 63-65 (CDV), and Asn-91. Positions 138 and 148 each coordinate substrate. Tyr-151 (proton acceptor) is an active-site residue. NAD(+) is bound by residues 151–155 (YCASK) and 186–188 (VDT).

The protein belongs to the short-chain dehydrogenases/reductases (SDR) family. As to quaternary structure, homodimer. As to expression, expressed in proximal convoluted tubules of the kidney, where it colocalizes with the prostaglandin transporter SLC22A22 (at protein level). Expressed in lung, intestine, stomach and liver.

It is found in the cytoplasm. It catalyses the reaction prostaglandin E2 + NAD(+) = 15-oxoprostaglandin E2 + NADH + H(+). The enzyme catalyses (15S)-hydroxy-(5Z,8Z,11Z,13E)-eicosatetraenoate + NAD(+) = 15-oxo-(5Z,8Z,11Z,13E)-eicosatetraenoate + NADH + H(+). It carries out the reaction (11R)-hydroxy-(5Z,8Z,12E,14Z)-eicosatetraenoate + NAD(+) = 11-oxo-(5Z,8Z,12E,14Z)-eicosatetraenoate + NADH + H(+). The catalysed reaction is lipoxin A4 + NAD(+) = 15-oxo-(5S,6R)-dihydroxy-(7E,9E,11Z,13E)-eicosatetraenoate + NADH + H(+). It catalyses the reaction 15-oxo-(5S,6R)-dihydroxy-(7E,9E,11Z)-eicosatrienoate + NADH + H(+) = (5S,6R,15S)-trihydroxy-(7E,9E,11Z)-eicosatrienoate + NAD(+). The enzyme catalyses prostaglandin A1 + NAD(+) = 15-oxo-prostaglandin A1 + NADH + H(+). It carries out the reaction prostaglandin E1 + NAD(+) = 15-oxoprostaglandin E1 + NADH + H(+). The catalysed reaction is 14-hydroxy-(4Z,7Z,10Z,12E,16Z,19Z)-docosahexaenoate + NAD(+) = 14-oxo-(4Z,7Z,10Z,12E,16Z,19Z)-docosahexaenoate + NADH + H(+). It catalyses the reaction resolvin E1 + NAD(+) = 18-oxo-resolvin E1 + NADH + H(+). The enzyme catalyses resolvin D1 + NAD(+) = 8-oxoresolvin D1 + NADH + H(+). It carries out the reaction resolvin D1 + NAD(+) = 17-oxoresolvin D1 + NADH + H(+). The catalysed reaction is resolvin D2 + NAD(+) = 7-oxoresolvin D2 + NADH + H(+). It catalyses the reaction resolvin D2 + NAD(+) = 16-oxoresolvin D2 + NADH + H(+). Functionally, catalyzes the NAD-dependent dehydrogenation (oxidation) of a broad array of hydroxylated polyunsaturated fatty acids (mainly eicosanoids and docosanoids, including prostaglandins, lipoxins and resolvins), yielding their corresponding keto (oxo) metabolites. Decreases the levels of the pro-proliferative prostaglandins such as prostaglandin E2 (whose activity is increased in cancer because of an increase in the expression of cyclooxygenase 2) and generates oxo-fatty acid products that can profoundly influence cell function by abrogating pro-inflammatory cytokine expression. Converts resolvins E1, D1 and D2 to their oxo products, which represents a mode of resolvin inactivation. Resolvin E1 plays important roles during the resolution phase of acute inflammation, while resolvins D1 and D2 have a unique role in obesity-induced adipose inflammation. This Mus musculus (Mouse) protein is 15-hydroxyprostaglandin dehydrogenase [NAD(+)] (Hpgd).